Consider the following 314-residue polypeptide: tRNA(Ile)-lysidine synthase, chloroplastic (314 aa).

31 to 36 contributes to the ATP binding site; sequence SGGQDS.

Belongs to the tRNA(Ile)-lysidine synthase family.

Its subcellular location is the plastid. The protein localises to the chloroplast. The enzyme catalyses cytidine(34) in tRNA(Ile2) + L-lysine + ATP = lysidine(34) in tRNA(Ile2) + AMP + diphosphate + H(+). Ligates lysine onto the cytidine present at position 34 of the AUA codon-specific tRNA(Ile) that contains the anticodon CAU, in an ATP-dependent manner. Cytidine is converted to lysidine, thus changing the amino acid specificity of the tRNA from methionine to isoleucine. The polypeptide is tRNA(Ile)-lysidine synthase, chloroplastic (Cyanidium caldarium (Red alga)).